A 633-amino-acid polypeptide reads, in one-letter code: Keratin, type II cytoskeletal 2 epidermal (633 aa).

The interval 1 to 189 (MSCQISCKSR…DPEIQNVKSQ (189 aa)) is head. Arg-18 is subject to Asymmetric dimethylarginine. A phosphoserine mark is found at Ser-21, Ser-24, and Ser-60. Residues 190-225 (EREQIKTLNNKFASFIDKVRFLEQQNQVLQTKWELL) form a coil 1A region. One can recognise an IF rod domain in the interval 190-503 (EREQIKTLNN…KLLEGEECRM (314 aa)). Residues 226 to 244 (QQLDVSTRTTNLEPIFQAY) form a linker 1 region. The tract at residues 245–336 (IAKLKKYVDT…FLFDXELSQM (92 aa)) is coil 1B. The tract at residues 337–360 (QTQISETNVTLSMDNNRSLDLDSI) is linker 12. The segment at 361–499 (ISEVKAQYEE…ATYRKLLEGE (139 aa)) is coil 2. Residues 500-633 (ECRMSGDLSS…SGSSVTFSFR (134 aa)) are tail. The span at 518 to 527 (SSMSSSMTSR) shows a compositional bias: low complexity. The disordered stretch occupies residues 518-633 (SSMSSSMTSR…SGSSVTFSFR (116 aa)). Residues 528–613 (GGFGGYGSGG…GYGSGGGSRG (86 aa)) are compositionally biased toward gly residues. Residues Arg-588 and Arg-612 each carry the omega-N-methylarginine modification.

Belongs to the intermediate filament family. As to quaternary structure, heterotetramer of two type I and two type II keratins. Associates with KRT10.

It localises to the cytoplasm. Its function is as follows. Probably contributes to terminal cornification. Associated with keratinocyte activation, proliferation and keratinization. Required for maintenance of corneocytes and keratin filaments in suprabasal keratinocytes in the epidermis of the ear, potentially via moderation of expression and localization of keratins and their partner proteins. Plays a role in the establishment of the epidermal barrier on plantar skin. The chain is Keratin, type II cytoskeletal 2 epidermal (KRT2) from Canis lupus familiaris (Dog).